The chain runs to 173 residues: RNA pyrophosphohydrolase (173 aa).

Residues Gly6 to Arg149 enclose the Nudix hydrolase domain. The Nudix box motif lies at Gly38–Gly59.

It belongs to the Nudix hydrolase family. RppH subfamily. A divalent metal cation serves as cofactor.

Its function is as follows. Accelerates the degradation of transcripts by removing pyrophosphate from the 5'-end of triphosphorylated RNA, leading to a more labile monophosphorylated state that can stimulate subsequent ribonuclease cleavage. This is RNA pyrophosphohydrolase from Thioalkalivibrio sulfidiphilus (strain HL-EbGR7).